The sequence spans 196 residues: Large ribosomal subunit protein uL18 (196 aa).

The protein belongs to the universal ribosomal protein uL18 family. As to quaternary structure, part of the 50S ribosomal subunit. Contacts the 5S and 23S rRNAs.

Functionally, this is one of the proteins that bind and probably mediate the attachment of the 5S RNA into the large ribosomal subunit, where it forms part of the central protuberance. This Saccharolobus islandicus (strain L.S.2.15 / Lassen #1) (Sulfolobus islandicus) protein is Large ribosomal subunit protein uL18.